The chain runs to 360 residues: Phospho-N-acetylmuramoyl-pentapeptide-transferase (360 aa).

The next 10 helical transmembrane spans lie at 18–38, 73–93, 97–117, 134–154, 168–188, 199–219, 236–256, 263–283, 288–308, and 338–358; these read VFSYVTFRAILGLLTALVFSL, TMGGLLILAGIFVSVLLWGDL, YVLVMLFVLGSFGTIGFIDDY, YILQSLAALVVAVFLYSSSTL, VMPQLGLVFIVLAYFTIVGAS, GLAIMPTVMVAGAFALIAYLS, AGELVIVCTAIVGAGLGFLWF, VFMGDVGSLALGAALGAIAVL, ILLVIMGGVFVMETVSVILQV, and VIVRFWIISLFLVLLGLATLK.

This sequence belongs to the glycosyltransferase 4 family. MraY subfamily. Mg(2+) is required as a cofactor.

It localises to the cell inner membrane. It catalyses the reaction UDP-N-acetyl-alpha-D-muramoyl-L-alanyl-gamma-D-glutamyl-meso-2,6-diaminopimeloyl-D-alanyl-D-alanine + di-trans,octa-cis-undecaprenyl phosphate = di-trans,octa-cis-undecaprenyl diphospho-N-acetyl-alpha-D-muramoyl-L-alanyl-D-glutamyl-meso-2,6-diaminopimeloyl-D-alanyl-D-alanine + UMP. It functions in the pathway cell wall biogenesis; peptidoglycan biosynthesis. Catalyzes the initial step of the lipid cycle reactions in the biosynthesis of the cell wall peptidoglycan: transfers peptidoglycan precursor phospho-MurNAc-pentapeptide from UDP-MurNAc-pentapeptide onto the lipid carrier undecaprenyl phosphate, yielding undecaprenyl-pyrophosphoryl-MurNAc-pentapeptide, known as lipid I. This chain is Phospho-N-acetylmuramoyl-pentapeptide-transferase, found in Shewanella denitrificans (strain OS217 / ATCC BAA-1090 / DSM 15013).